Consider the following 272-residue polypeptide: uncharacterized protein (272 aa).

2 helical membrane passes run 9–29 (GGDI…ASEH) and 252–272 (SHIS…ISFI).

The protein resides in the membrane. This is an uncharacterized protein from Caenorhabditis elegans.